Here is a 327-residue protein sequence, read N- to C-terminus: Tetraacyldisaccharide 4'-kinase (327 aa).

T58–T65 serves as a coordination point for ATP.

This sequence belongs to the LpxK family.

The enzyme catalyses a lipid A disaccharide + ATP = a lipid IVA + ADP + H(+). It participates in glycolipid biosynthesis; lipid IV(A) biosynthesis; lipid IV(A) from (3R)-3-hydroxytetradecanoyl-[acyl-carrier-protein] and UDP-N-acetyl-alpha-D-glucosamine: step 6/6. Transfers the gamma-phosphate of ATP to the 4'-position of a tetraacyldisaccharide 1-phosphate intermediate (termed DS-1-P) to form tetraacyldisaccharide 1,4'-bis-phosphate (lipid IVA). The polypeptide is Tetraacyldisaccharide 4'-kinase (Alcanivorax borkumensis (strain ATCC 700651 / DSM 11573 / NCIMB 13689 / SK2)).